Reading from the N-terminus, the 307-residue chain is Methionyl-tRNA formyltransferase (307 aa).

109 to 112 lines the (6S)-5,6,7,8-tetrahydrofolate pocket; sequence SMLP.

Belongs to the Fmt family.

It carries out the reaction L-methionyl-tRNA(fMet) + (6R)-10-formyltetrahydrofolate = N-formyl-L-methionyl-tRNA(fMet) + (6S)-5,6,7,8-tetrahydrofolate + H(+). In terms of biological role, attaches a formyl group to the free amino group of methionyl-tRNA(fMet). The formyl group appears to play a dual role in the initiator identity of N-formylmethionyl-tRNA by promoting its recognition by IF2 and preventing the misappropriation of this tRNA by the elongation apparatus. This is Methionyl-tRNA formyltransferase from Orientia tsutsugamushi (strain Boryong) (Rickettsia tsutsugamushi).